A 480-amino-acid polypeptide reads, in one-letter code: Uridine 5'-monophosphate synthase (480 aa).

A2 bears the N-acetylalanine mark. An OPRTase region spans residues 2 to 214; sequence AAADALLGSL…AFVAANPNDS (213 aa). The residue at position 37 (Y37) is a Phosphotyrosine. S214 carries the phosphoserine modification. Residues 215–220 are domain linker; that stretch reads LPSVKK. The interval 221-480 is OMPdecase; that stretch reads EPKELSFGAR…WEAYLSRLAV (260 aa). Orotidine 5'-phosphate is bound at residue S257. UMP contacts are provided by residues S257, D259, and 281-283; that span reads KIH. Residues K281, K314, D317, T321, S372, 430-432, and 450-451 each bind orotidine 5'-phosphate; these read QQY and GR. Catalysis depends on for OMPdecase activity residues K314 and D317. Residues D317, T321, S372, 430-432, and 450-451 contribute to the UMP site; these read QQY and GR.

It in the N-terminal section; belongs to the purine/pyrimidine phosphoribosyltransferase family. In the C-terminal section; belongs to the OMP decarboxylase family. In terms of assembly, homodimer; dimerization is required for enzymatic activity.

It catalyses the reaction orotidine 5'-phosphate + diphosphate = orotate + 5-phospho-alpha-D-ribose 1-diphosphate. The enzyme catalyses orotidine 5'-phosphate + H(+) = UMP + CO2. Its pathway is pyrimidine metabolism; UMP biosynthesis via de novo pathway; UMP from orotate: step 1/2. It functions in the pathway pyrimidine metabolism; UMP biosynthesis via de novo pathway; UMP from orotate: step 2/2. Its function is as follows. Bifunctional enzyme catalyzing the last two steps of de novo pyrimidine biosynthesis, orotate phosphoribosyltransferase (OPRT), which converts orotate to orotidine-5'-monophosphate (OMP), and orotidine-5'-monophosphate decarboxylase (ODC), the terminal enzymatic reaction that decarboxylates OMP to uridine monophosphate (UMP). This chain is Uridine 5'-monophosphate synthase (UMPS), found in Bos taurus (Bovine).